The primary structure comprises 310 residues: Hydroxyacylglutathione hydrolase, mitochondrial (310 aa).

Histidine 104, histidine 106, aspartate 108, histidine 109, histidine 160, and aspartate 184 together coordinate Zn(2+). Substrate contacts are provided by residues 193–195, 223–225, and 299–302; these read KFF, HEY, and RKEK. Histidine 223 is a binding site for Zn(2+).

It belongs to the metallo-beta-lactamase superfamily. Glyoxalase II family. As to quaternary structure, monomer. Zn(2+) is required as a cofactor.

Its subcellular location is the mitochondrion matrix. It is found in the cytoplasm. It carries out the reaction an S-(2-hydroxyacyl)glutathione + H2O = a 2-hydroxy carboxylate + glutathione + H(+). The enzyme catalyses (R)-S-lactoylglutathione + H2O = (R)-lactate + glutathione + H(+). In terms of biological role, thiolesterase that catalyzes the hydrolysis of S-D-lactoyl-glutathione to form glutathione and D-lactic acid. The sequence is that of Hydroxyacylglutathione hydrolase, mitochondrial (HAGH) from Gallus gallus (Chicken).